A 548-amino-acid chain; its full sequence is Transcriptional adapter ADA2a (548 aa).

A disordered region spans residues 1 to 30 (MGRSKLASRPAEEDLNPGKSKRKKISLGPE). The ZZ-type zinc finger occupies 48–104 (PGLYCCNYCDKDLSGLVRFKCAVCMDFDLCVECFSVGVELNRHKNSHPYRVMDNLSF). Cys-53, Cys-56, Cys-68, Cys-71, Cys-77, Cys-80, His-90, and His-94 together coordinate Zn(2+). Residues 106 to 158 (LVTSDWNADEEILLLEAIATYGFGNWKEVADHVGSKTTTECIKHFNSAYMQSP) form the SANT domain. Lys-257 is subject to N6-acetyllysine; by GCN5. Residues 365-386 (QSKEEHKELIKKVIEEHQILRR) are a coiled coil. Residues 461-548 (PRIYSGLDTW…LVHKGIGDST (88 aa)) form the SWIRM domain.

In terms of assembly, interacts in vitro with the HAT domain of GCN5 and with the DNA-binding domain of the transcriptional activator DREB1B/CBF1. Post-translationally, acetylated in vitro by GCN5, but acetylation is not essential for biological activity. As to expression, expressed in roots and leaves.

Its subcellular location is the nucleus. Functionally, required for the function of some acidic activation domains, which activate transcription from a distant site. The exact mechanism of action is not yet known. ADA2 stimulates the acetyltransferase activity of GCN5 on free histones or nucleosomes, probably by opening up the promoter region. The polypeptide is Transcriptional adapter ADA2a (ADA2A) (Arabidopsis thaliana (Mouse-ear cress)).